A 527-amino-acid chain; its full sequence is Estrogen receptor beta (527 aa).

The modulating stretch occupies residues 1 to 145; sequence MDVKNSPSSL…SPSSKRDAHF (145 aa). A phosphoserine; by MAPK mark is found at S84 and S102. NR C4-type zinc fingers lie at residues 146–166 and 182–206; these read CAVC…CEGC and CPAT…LRKC. The nuclear receptor DNA-binding region spans 146 to 211; it reads CAVCSDYASG…RLRKCYEVGM (66 aa). The NR LBD domain occupies 261 to 495; the sequence is SPEQLVLTLL…DLLLEMLNAH (235 aa). The tract at residues 505–527 is disordered; that stretch reads TRSERNLAEDSESKEGSQKPQAQ. The span at 506 to 521 shows a compositional bias: basic and acidic residues; that stretch reads RSERNLAEDSESKEGS.

This sequence belongs to the nuclear hormone receptor family. NR3 subfamily. As to quaternary structure, binds DNA as a homodimer. Can form a heterodimer with ESR1. Interacts with NCOA1, NCOA3, NCOA5 and NCOA6 coactivators, leading to a strong increase of transcription of target genes. Interacts with UBE1C and AKAP13. Interacts with DNTTIP2. Interacts with CCDC62 in the presence of estradiol/E2; this interaction seems to enhance the transcription of target genes. Interacts with DNAAF4. Interacts with PRMT2. Interacts with CCAR2 (via N-terminus) in a ligand-independent manner. Interacts with RBM39, in the presence of estradiol (E2). Interacts with STUB1/CHIP. In terms of processing, phosphorylation at Ser-84 and Ser-102 recruits NCOA1.

Its subcellular location is the nucleus. Its function is as follows. Nuclear hormone receptor. Binds estrogens with an affinity similar to that of ESR1/ER-alpha, and activates expression of reporter genes containing estrogen response elements (ERE) in an estrogen-dependent manner. This chain is Estrogen receptor beta (ESR2), found in Ovis aries (Sheep).